The chain runs to 277 residues: S-formylglutathione hydrolase FrmB (277 aa).

Active-site charge relay system residues include Ser145, Asp221, and His254.

It belongs to the esterase D family.

It catalyses the reaction S-formylglutathione + H2O = formate + glutathione + H(+). In terms of biological role, serine hydrolase involved in the detoxification of formaldehyde. Hydrolyzes S-formylglutathione to glutathione and formate. The polypeptide is S-formylglutathione hydrolase FrmB (frmB) (Escherichia coli O157:H7).